The primary structure comprises 682 residues: Potassium-transporting ATPase ATP-binding subunit (682 aa).

4 consecutive transmembrane segments (helical) span residues 34–54 (PVMF…IAMA), 62–82 (ALFS…ANFA), 219–239 (IALT…TATL), and 254–274 (VLVA…LSAI). Aspartate 307 acts as the 4-aspartylphosphate intermediate in catalysis. ATP is bound by residues aspartate 344, glutamate 348, 377 to 384 (FTAQSRMS), and lysine 395. Positions 518 and 522 each coordinate Mg(2+). The next 3 helical transmembrane spans lie at 588–608 (FAII…LNIM), 616–636 (AILS…PLAL), and 656–676 (IYGL…DLLL).

This sequence belongs to the cation transport ATPase (P-type) (TC 3.A.3) family. Type IA subfamily. In terms of assembly, the system is composed of three essential subunits: KdpA, KdpB and KdpC.

It is found in the cell inner membrane. It carries out the reaction K(+)(out) + ATP + H2O = K(+)(in) + ADP + phosphate + H(+). In terms of biological role, part of the high-affinity ATP-driven potassium transport (or Kdp) system, which catalyzes the hydrolysis of ATP coupled with the electrogenic transport of potassium into the cytoplasm. This subunit is responsible for energy coupling to the transport system and for the release of the potassium ions to the cytoplasm. This chain is Potassium-transporting ATPase ATP-binding subunit, found in Escherichia coli O139:H28 (strain E24377A / ETEC).